A 505-amino-acid polypeptide reads, in one-letter code: MMNLLFHRLKRPLAAAFVGASTTLAFAPYQLWPIAILSPAILLILLANQTPKRALWIGYAWGLGQFATGVSWVYVSISGFGGMPLIANLFLMGMLIAYLAVYSGLFAWLNNKFFPQFSLSKALLAAPALWLITDWLRGWVMTGFPWLWLGYSQIDAPLASFAPIGGVELLTLFVLISAGALAYAWIHKQWLMIIIPVVLMSAGFGIRQYDWVTPRPEDTTKVALIQGNVDQNLKWLPSQRWPTIMKYADLTRENWDADIIVWPEAAIPAFEVEVPSFLSNIDSAAKMNNSAIITGIVNQSEDRQFYNSILSLGVTPYGDYSFDMSERYHKHHLLPFGEFVPFEDILRPLAPFFNLPMSSFSRGAFVQPNIVANGMHMAPALCYEIIFNEQVRQNVTDETDFILTLSNDAWFGHSIGPLQHMEIARMRALELGKPLIRSTNNGLTAVTDYKGKIVEQVPQFETAVLRAELTPTDGTTPYRTFGTWPLYFWVALSLMLAWWLPRKKD.

The next 6 membrane-spanning stretches (helical) occupy residues 26–46 (FAPYQLWPIAILSPAILLILL), 66–86 (FATGVSWVYVSISGFGGMPLI), 89–109 (LFLMGMLIAYLAVYSGLFAWL), 129–149 (LWLITDWLRGWVMTGFPWLWL), 161–181 (FAPIGGVELLTLFVLISAGAL), and 186–206 (IHKQWLMIIIPVVLMSAGFGI). Residues 225–471 (IQGNVDQNLK…TAVLRAELTP (247 aa)) form the CN hydrolase domain. The active-site Proton acceptor is glutamate 264. Lysine 330 is an active-site residue. Residue cysteine 382 is the Nucleophile of the active site. Residues 481–501 (FGTWPLYFWVALSLMLAWWLP) traverse the membrane as a helical segment.

Belongs to the CN hydrolase family. Apolipoprotein N-acyltransferase subfamily.

It is found in the cell inner membrane. It carries out the reaction N-terminal S-1,2-diacyl-sn-glyceryl-L-cysteinyl-[lipoprotein] + a glycerophospholipid = N-acyl-S-1,2-diacyl-sn-glyceryl-L-cysteinyl-[lipoprotein] + a 2-acyl-sn-glycero-3-phospholipid + H(+). Its pathway is protein modification; lipoprotein biosynthesis (N-acyl transfer). Its function is as follows. Catalyzes the phospholipid dependent N-acylation of the N-terminal cysteine of apolipoprotein, the last step in lipoprotein maturation. The chain is Apolipoprotein N-acyltransferase from Vibrio parahaemolyticus serotype O3:K6 (strain RIMD 2210633).